Consider the following 170-residue polypeptide: Photosystem II extrinsic protein V (170 aa).

Residues 1 to 33 (MVSVFSSLRQSFKGLLVLVPVLIGLAFISPAEA) form the signal peptide. 4 residues coordinate heme c: C70, C73, H74, and M137.

Belongs to the cytochrome c family. PsbV subfamily. PSII is composed of 1 copy each of membrane proteins PsbA, PsbB, PsbC, PsbD, PsbE, PsbF, PsbH, PsbI, PsbJ, PsbK, PsbL, PsbM, PsbT, PsbX, PsbY, PsbZ, Psb30/Ycf12, peripheral proteins PsbO, CyanoQ (PsbQ), PsbU, PsbV and a large number of cofactors. It forms dimeric complexes. Heme c serves as cofactor.

The protein resides in the cellular thylakoid membrane. In terms of biological role, one of the extrinsic, lumenal subunits of photosystem II (PSII). PSII is a light-driven water plastoquinone oxidoreductase, using light energy to abstract electrons from H(2)O, generating a proton gradient subsequently used for ATP formation. The extrinsic proteins stabilize the structure of photosystem II oxygen-evolving complex (OEC), the ion environment of oxygen evolution and protect the OEC against heat-induced inactivation. Low-potential cytochrome c that plays a role in the OEC of PSII. This Synechococcus sp. (strain CC9902) protein is Photosystem II extrinsic protein V.